The primary structure comprises 285 residues: Putative cysteine-rich repeat secretory protein 14 (285 aa).

An N-terminal signal peptide occupies residues 1–30 (MSSFCLSKHLILVPILVMMAQLLLIRNVLS). Gnk2-homologous domains lie at 37-143 (YLYH…SIST) and 161-273 (RPNA…RYPF).

The protein belongs to the cysteine-rich repeat secretory protein family.

The protein localises to the secreted. This Arabidopsis thaliana (Mouse-ear cress) protein is Putative cysteine-rich repeat secretory protein 14 (CRRSP14).